The sequence spans 358 residues: tRNA-specific 2-thiouridylase MnmA (358 aa).

Residues 8-15 (GLSGGVDS) and Leu34 each bind ATP. Catalysis depends on Cys95, which acts as the Nucleophile. An intrachain disulfide couples Cys95 to Cys194. Gly120 lines the ATP pocket. The interval 144 to 146 (KDQ) is interaction with tRNA. Cys194 acts as the Cysteine persulfide intermediate in catalysis. Residues 299 to 300 (RY) are interaction with tRNA.

The protein belongs to the MnmA/TRMU family.

The protein localises to the cytoplasm. The enzyme catalyses S-sulfanyl-L-cysteinyl-[protein] + uridine(34) in tRNA + AH2 + ATP = 2-thiouridine(34) in tRNA + L-cysteinyl-[protein] + A + AMP + diphosphate + H(+). Its function is as follows. Catalyzes the 2-thiolation of uridine at the wobble position (U34) of tRNA, leading to the formation of s(2)U34. This is tRNA-specific 2-thiouridylase MnmA from Synechocystis sp. (strain ATCC 27184 / PCC 6803 / Kazusa).